The chain runs to 3063 residues: Genome polyprotein (3063 aa).

One can recognise a Peptidase S30 domain in the interval 141–284 (KLTEGQMNHL…QSILNSMIQF (144 aa)). Active-site for P1 proteinase activity residues include H192, D201, and S235. The short motif at 334–337 (KITC) is the Involved in interaction with stylet and aphid transmission element. Positions 592–594 (PTK) match the Involved in virions binding and aphid transmission motif. Residues 618-740 (LYIAKQGYCY…ESDIKHYRVG (123 aa)) enclose the Peptidase C6 domain. Residues C626 and H699 each act as for helper component proteinase activity in the active site. The region spanning 1229 to 1381 (DIAHSEHLDF…TQQPVKLIVE (153 aa)) is the Helicase ATP-binding domain. 1242 to 1249 (GAVGSGKS) lines the ATP pocket. The short motif at 1331 to 1334 (DECH) is the DECH box element. Residues 1400–1559 (DVVQFGSNVL…NLPVMTGGVS (160 aa)) enclose the Helicase C-terminal domain. The short motif at 1884–1892 (RKKGKGKGT) is the Nuclear localization signal element. Y1907 is subject to O-(5'-phospho-RNA)-tyrosine. The segment at 1949 to 1964 (KMVENDDIEMQALGSN) is interaction with host EIF4E. Residues 2032–2250 (AKSLMRGLRD…VLWGPLKLKD (219 aa)) enclose the Peptidase C4 domain. Active-site for nuclear inclusion protein A activity residues include H2077, D2112, and C2182. The 125-residue stretch at 2519–2643 (WVYCDADGSQ…AVNPEKESIL (125 aa)) folds into the RdRp catalytic domain. Residues 2798 to 2841 (NDTIDAGGSNKKDAKPEQGSIQPNPNKGKDKDVNAGTSGTHTVP) are disordered. T3046 carries the post-translational modification Phosphothreonine.

It belongs to the potyviridae genome polyprotein family. In terms of assembly, interacts with host eIF4E protein (via cap-binding region); this interaction mediates the translation of the VPg-viral RNA conjugates. Part of a complex that comprises VPg, RNA, host EIF4E and EIF4G; this interaction mediates the translation of the VPg-viral RNA conjugates. Interaction is possible in susceptible hosts but impaired in resistant plants: the VPg of strain LYE84 interacts with tomato eIF4E1 and eIF4E2 as well as with the Capsicum annuum eIF4E1 susceptible allele pvr2(+) but not with resistant alleles pvr2(1), pvr2(2), pvr2(3), pvr2(4), pvr2(5), pvr2(6), pvr2(7), pvr2(8) and pvr2(9), the VPg of strain SON41 interacts with C.annuum eIF4E1 susceptible alleles pvr2(+), pvr2(1), pvr2(2), pvr2(3) and pvr2(4) but not with resistant alleles pvr2(5), pvr2(6), pvr2(7), pvr2(8) and pvr2(9), the VPg of strain LYE90 interacts only with tomato eIF4E1. VPg is uridylylated by the polymerase and is covalently attached to the 5'-end of the genomic RNA. This uridylylated form acts as a nucleotide-peptide primer for the polymerase. Post-translationally, potyviral RNA is expressed as two polyproteins which undergo post-translational proteolytic processing. Genome polyprotein is processed by NIa-pro, P1 and HC-pro proteinases resulting in the production of at least ten individual proteins. P3N-PIPO polyprotein is cleaved by P1 and HC-pro proteinases resulting in the production of three individual proteins. The P1 proteinase and the HC-pro cleave only their respective C-termini autocatalytically. 6K1 is essential for proper proteolytic separation of P3 from CI.

The protein resides in the host cytoplasmic vesicle. The protein localises to the host nucleus. It localises to the virion. It carries out the reaction RNA(n) + a ribonucleoside 5'-triphosphate = RNA(n+1) + diphosphate. It catalyses the reaction Hydrolyzes glutaminyl bonds, and activity is further restricted by preferences for the amino acids in P6 - P1' that vary with the species of potyvirus, e.g. Glu-Xaa-Xaa-Tyr-Xaa-Gln-|-(Ser or Gly) for the enzyme from tobacco etch virus. The natural substrate is the viral polyprotein, but other proteins and oligopeptides containing the appropriate consensus sequence are also cleaved.. The catalysed reaction is Hydrolyzes a Gly-|-Gly bond at its own C-terminus, commonly in the sequence -Tyr-Xaa-Val-Gly-|-Gly, in the processing of the potyviral polyprotein.. In terms of biological role, required for aphid transmission and also has proteolytic activity. Only cleaves a Gly-Gly dipeptide at its own C-terminus. Interacts with virions and aphid stylets. Acts as a suppressor of RNA-mediated gene silencing, also known as post-transcriptional gene silencing (PTGS), a mechanism of plant viral defense that limits the accumulation of viral RNAs. May have RNA-binding activity. Functionally, has helicase activity. It may be involved in replication. Its function is as follows. Indispensable for virus replication. Reduces the abundance of host transcripts related to jasmonic acid biosynthesis therefore altering the host defenses. In order to increase its own stability, decreases host protein degradation pathways. Indispensable for virus replication. In terms of biological role, mediates the cap-independent, EIF4E-dependent translation of viral genomic RNAs. Binds to the cap-binding site of host EIF4E and thus interferes with the host EIF4E-dependent mRNA export and translation. VPg-RNA directly binds EIF4E and is a template for transcription. Also forms trimeric complexes with EIF4E-EIF4G, which are templates for translation. Functionally, has RNA-binding and proteolytic activities. Its function is as follows. An RNA-dependent RNA polymerase that plays an essential role in the virus replication. Involved in aphid transmission, cell-to-cell and systemis movement, encapsidation of the viral RNA and in the regulation of viral RNA amplification. In Potato virus Y (strain N) (PVY), this protein is Genome polyprotein.